The chain runs to 448 residues: UDP-glycosyltransferase 79B5 (448 aa).

UDP-alpha-D-glucose is bound by residues Thr261, 320-322, 337-345, and 359-362; these read LEQ, HCGFGSMWE, and LADQ.

This sequence belongs to the UDP-glycosyltransferase family.

This Arabidopsis thaliana (Mouse-ear cress) protein is UDP-glycosyltransferase 79B5 (UGT79B5).